A 315-amino-acid chain; its full sequence is tRNA uridine(34) hydroxylase (315 aa).

Residues 136–230 (SDPETLVIDT…YLEEIPPEES (95 aa)) enclose the Rhodanese domain. Residue cysteine 190 is the Cysteine persulfide intermediate of the active site.

The protein belongs to the TrhO family.

It catalyses the reaction uridine(34) in tRNA + AH2 + O2 = 5-hydroxyuridine(34) in tRNA + A + H2O. Its function is as follows. Catalyzes oxygen-dependent 5-hydroxyuridine (ho5U) modification at position 34 in tRNAs. This chain is tRNA uridine(34) hydroxylase, found in Sinorhizobium medicae (strain WSM419) (Ensifer medicae).